A 214-amino-acid polypeptide reads, in one-letter code: Phosphatidylserine decarboxylase proenzyme (214 aa).

Catalysis depends on S182, which acts as the Schiff-base intermediate with substrate; via pyruvic acid. Position 182 is a pyruvic acid (Ser); by autocatalysis (S182).

It belongs to the phosphatidylserine decarboxylase family. PSD-A subfamily. As to quaternary structure, heterodimer of a large membrane-associated beta subunit and a small pyruvoyl-containing alpha subunit. The cofactor is pyruvate. Post-translationally, is synthesized initially as an inactive proenzyme. Formation of the active enzyme involves a self-maturation process in which the active site pyruvoyl group is generated from an internal serine residue via an autocatalytic post-translational modification. Two non-identical subunits are generated from the proenzyme in this reaction, and the pyruvate is formed at the N-terminus of the alpha chain, which is derived from the carboxyl end of the proenzyme. The post-translation cleavage follows an unusual pathway, termed non-hydrolytic serinolysis, in which the side chain hydroxyl group of the serine supplies its oxygen atom to form the C-terminus of the beta chain, while the remainder of the serine residue undergoes an oxidative deamination to produce ammonia and the pyruvoyl prosthetic group on the alpha chain.

The protein resides in the cell membrane. The catalysed reaction is a 1,2-diacyl-sn-glycero-3-phospho-L-serine + H(+) = a 1,2-diacyl-sn-glycero-3-phosphoethanolamine + CO2. The protein operates within phospholipid metabolism; phosphatidylethanolamine biosynthesis; phosphatidylethanolamine from CDP-diacylglycerol: step 2/2. Its function is as follows. Catalyzes the formation of phosphatidylethanolamine (PtdEtn) from phosphatidylserine (PtdSer). The sequence is that of Phosphatidylserine decarboxylase proenzyme from Burkholderia vietnamiensis (strain G4 / LMG 22486) (Burkholderia cepacia (strain R1808)).